We begin with the raw amino-acid sequence, 466 residues long: Vacuolar protein sorting-associated protein 30 (466 aa).

The interval 35–55 is disordered; the sequence is SETNTDNSDNNKHNGENDRNI. A compositionally biased stretch (basic and acidic residues) spans 43–53; the sequence is DNNKHNGENDR. A coiled-coil region spans residues 149–258; that stretch reads DTLLEKLKEE…QMEHLSFIKD (110 aa). Residues 279 to 463 form a BARA region; sequence LNIYNETFRI…LAFSTSRINK (185 aa). A required for membrane-association, autophagic function during starvation and normal autophagosome morphology region spans residues 439–464; the sequence is WTTACKFLLTNIKWLLAFSTSRINKA.

Belongs to the beclin family. In terms of assembly, component of the autophagy-specific VPS34 PI3-kinase complex I; and of the VPS34 PI3-kinase complex II.

It is found in the endosome membrane. Its subcellular location is the vacuole membrane. The protein resides in the preautophagosomal structure membrane. Functionally, required for cytoplasm to vacuole transport (Cvt), autophagy, nucleophagy, and mitophagy, as a part of the autophagy-specific VPS34 PI3-kinase complex I. This complex is essential to recruit the ATG8-phosphatidylinositol conjugate and the ATG12-ATG5 conjugate to the pre-autophagosomal structure. Also involved in endosome-to-Golgi retrograde transport as part of the VPS34 PI3-kinase complex II. The protein is Vacuolar protein sorting-associated protein 30 of Kluyveromyces marxianus (strain DMKU3-1042 / BCC 29191 / NBRC 104275) (Yeast).